The chain runs to 394 residues: Elongation factor Tu 1 (394 aa).

In terms of domain architecture, tr-type G spans 10–204; that stretch reads KPHVNVGTIG…YLDSYIPEPE (195 aa). A G1 region spans residues 19–26; the sequence is GHVDHGKT. Residue 19–26 coordinates GTP; that stretch reads GHVDHGKT. Threonine 26 contributes to the Mg(2+) binding site. The segment at 60 to 64 is G2; it reads GITIN. Residues 81–84 are G3; sequence DCPG. GTP contacts are provided by residues 81 to 85 and 136 to 139; these read DCPGH and NKCD. The segment at 136–139 is G4; the sequence is NKCD. The tract at residues 174 to 176 is G5; the sequence is SAL.

It belongs to the TRAFAC class translation factor GTPase superfamily. Classic translation factor GTPase family. EF-Tu/EF-1A subfamily. Monomer.

The protein localises to the cytoplasm. The enzyme catalyses GTP + H2O = GDP + phosphate + H(+). Its function is as follows. GTP hydrolase that promotes the GTP-dependent binding of aminoacyl-tRNA to the A-site of ribosomes during protein biosynthesis. The polypeptide is Elongation factor Tu 1 (Serratia proteamaculans (strain 568)).